The primary structure comprises 317 residues: Ornithine carbamoyltransferase (317 aa).

Residues 57–60 (STRT), Q84, R108, and 135–138 (HPCQ) contribute to the carbamoyl phosphate site. Residues N166, D230, and 234–235 (SM) each bind L-ornithine. Carbamoyl phosphate-binding positions include 270-271 (CL) and R298.

The protein belongs to the aspartate/ornithine carbamoyltransferase superfamily. OTCase family. Homododecamer.

It is found in the cytoplasm. It carries out the reaction carbamoyl phosphate + L-ornithine = L-citrulline + phosphate + H(+). Its pathway is amino-acid biosynthesis; L-arginine biosynthesis; L-arginine from L-ornithine and carbamoyl phosphate: step 1/3. Functionally, reversibly catalyzes the transfer of the carbamoyl group from carbamoyl phosphate (CP) to the N(epsilon) atom of ornithine (ORN) to produce L-citrulline. The chain is Ornithine carbamoyltransferase from Pyrococcus abyssi (strain GE5 / Orsay).